The chain runs to 456 residues: UPF0496 protein 4 (456 aa).

A helical membrane pass occupies residues 195-217 (VLMRALYGIESVTVFVCSIFVAV). Residues 368–390 (QDSNVKQANGSSDESALVVPERT) form a disordered region. Residues 371–381 (NVKQANGSSDE) are compositionally biased toward polar residues.

The protein belongs to the ROH1 family.

It localises to the membrane. This Oryza sativa subsp. japonica (Rice) protein is UPF0496 protein 4.